We begin with the raw amino-acid sequence, 647 residues long: 1-phosphatidylinositol 4,5-bisphosphate phosphodiesterase zeta-1 (647 aa).

The EF-hand domain maps to 43–78; sequence CHFAHVKHIFKENDRQNQGRITIEEFRAIYRCIVHR. The region spanning 163 to 307 is the PI-PLC X-box domain; sequence QDMNHPLSDY…LKFKILVKNR (145 aa). Catalysis depends on residues H178 and H223. A PI-PLC Y-box domain is found at 386–502; the sequence is LSDLVIYTKA…GYILKPDILR (117 aa). The C2 domain maps to 502–627; sequence RDTTLGFNPN…KGYRRVPLFS (126 aa).

In terms of assembly, interacts via its C2 domain with PtdIns(3)P and, to a lesser extent, PtdIns(5)P in vitro. It depends on Ca(2+) as a cofactor. Highly expressed in postpuberal testis, where expression is sperm cell-specific. Also expressed in brain of both sexes.

It localises to the nucleus. Its subcellular location is the cytoplasm. It is found in the perinuclear region. The catalysed reaction is a 1,2-diacyl-sn-glycero-3-phospho-(1D-myo-inositol-4,5-bisphosphate) + H2O = 1D-myo-inositol 1,4,5-trisphosphate + a 1,2-diacyl-sn-glycerol + H(+). Functionally, the production of the second messenger molecules diacylglycerol (DAG) and inositol 1,4,5-trisphosphate (IP3) is mediated by activated phosphatidylinositol-specific phospholipase C enzymes. In vitro, hydrolyzes PtdIns(4,5)P2 in a Ca(2+)-dependent manner. Triggers intracellular Ca(2+) oscillations in oocytes solely during M phase and is involved in inducing oocyte activation and initiating embryonic development up to the blastocyst stage. Is therefore a strong candidate for the egg-activating soluble sperm factor that is transferred from the sperm into the egg cytoplasm following gamete membrane fusion. May exert an inhibitory effect on phospholipase-C-coupled processes that depend on calcium ions and protein kinase C, including CFTR trafficking and function. The polypeptide is 1-phosphatidylinositol 4,5-bisphosphate phosphodiesterase zeta-1 (Mus musculus (Mouse)).